The following is a 567-amino-acid chain: Geranylgeranyl transferase type-2 subunit alpha (567 aa).

6 PFTA repeats span residues 44–78, 88–122, 124–158, 159–193, 207–241, and 363–397; these read LDES…QLET, LVKA…RLPE, NWTR…QAAV, PPAE…QLHP, VLLK…RADP, and VLQS…ALDP. Ser-98 is subject to Phosphoserine. 5 LRR repeats span residues 442–463, 464–486, 487–508, 509–530, and 534–555; these read EVRV…EQLL, LVTH…AALR, CLEV…TNLP, RLQE…QPLA, and RLVL…LEQL.

Belongs to the protein prenyltransferase subunit alpha family. As to quaternary structure, heterotrimer composed of RABGGTA, RABGGTB and CHM; within this trimer, RABGGTA and RABGGTB form the catalytic component B, while CHM (component A) mediates peptide substrate binding. The Rab GGTase dimer (RGGT) interacts with CHM (component A) prior to Rab protein binding; the association is stabilized by geranylgeranyl pyrophosphate (GGpp). The CHM:RGGT:Rab complex is destabilized by GGpp. Interacts with non-phosphorylated form of RAB8A; phosphorylation of RAB8A at 'Thr-72' disrupts this interaction.

It catalyses the reaction geranylgeranyl diphosphate + L-cysteinyl-[protein] = S-geranylgeranyl-L-cysteinyl-[protein] + diphosphate. The enzymatic reaction requires the aid of a Rab escort protein (also called component A), such as CHM. Catalyzes the transfer of a geranylgeranyl moiety from geranylgeranyl diphosphate to both cysteines of Rab proteins with the C-terminal sequence -XXCC, -XCXC and -CCXX, such as RAB1A, RAB3A, RAB5A and RAB7A. This Pongo abelii (Sumatran orangutan) protein is Geranylgeranyl transferase type-2 subunit alpha (RABGGTA).